A 188-amino-acid polypeptide reads, in one-letter code: dCTP deaminase (188 aa).

DCTP is bound by residues Lys111 to Arg116, Thr135 to Glu137, Gln156, Tyr170, and Gln180. The Proton donor/acceptor role is filled by Glu137.

The protein belongs to the dCTP deaminase family. As to quaternary structure, homotrimer.

It carries out the reaction dCTP + H2O + H(+) = dUTP + NH4(+). It participates in pyrimidine metabolism; dUMP biosynthesis; dUMP from dCTP (dUTP route): step 1/2. In terms of biological role, catalyzes the deamination of dCTP to dUTP. The polypeptide is dCTP deaminase (Marinobacter nauticus (strain ATCC 700491 / DSM 11845 / VT8) (Marinobacter aquaeolei)).